A 706-amino-acid polypeptide reads, in one-letter code: Axin-related protein (706 aa).

The 120-residue stretch at 72-191 folds into the RGS domain; it reads SLNLLLDDQD…LQSDICKEYA (120 aa). Disordered stretches follow at residues 278–298, 400–482, and 585–605; these read MTDG…REIH, TPAN…GTSA, and STTL…GFST. Over residues 402–412 the composition is skewed to polar residues; it reads ANLSPRSQSPF. The segment covering 453 to 462 has biased composition (low complexity); sequence RSSVSSQLPR. Positions 624–706 constitute a DIX domain; that stretch reads GQGLAIVYYF…KIICKVERAC (83 aa).

As to quaternary structure, interacts with dvl2/dsh via DIX domains in both proteins. Forms a complex with ctnnb1/beta-catenin and gsk3b. Also forms heterodimers with mouse Axin1.

The protein resides in the cytoplasm. The protein localises to the cytoplasmic vesicle. In terms of biological role, regulates the wnt signaling pathway by interacting with dvl2/dsh, which displaces gsk3b from the axnr-gsk3b complex and thus prevents degradation of ctnnb1/beta-catenin. This Xenopus laevis (African clawed frog) protein is Axin-related protein.